Here is a 62-residue protein sequence, read N- to C-terminus: uncharacterized protein (62 aa).

2 consecutive 4Fe-4S ferredoxin-type domains span residues 2–31 (AVTIDYSLCKGAECAECVNNCPMEVFEIEG) and 32–62 (DKVVVARPDDCTYCGVCEDVCPTGAVKVEPE). Cysteine 10, cysteine 15, cysteine 18, cysteine 22, cysteine 42, cysteine 45, cysteine 48, and cysteine 52 together coordinate [4Fe-4S] cluster.

Requires [4Fe-4S] cluster as cofactor.

This is an uncharacterized protein from Methanocaldococcus jannaschii (strain ATCC 43067 / DSM 2661 / JAL-1 / JCM 10045 / NBRC 100440) (Methanococcus jannaschii).